The following is a 397-amino-acid chain: Argininosuccinate synthase (397 aa).

Residue alanine 8–serine 16 participates in ATP binding. L-citrulline is bound at residue tyrosine 87. Glycine 117 contacts ATP. L-aspartate is bound by residues threonine 119, asparagine 123, and aspartate 124. Asparagine 123 contributes to the L-citrulline binding site. Arginine 127, serine 175, glutamate 259, and tyrosine 271 together coordinate L-citrulline.

The protein belongs to the argininosuccinate synthase family. Type 1 subfamily. As to quaternary structure, homotetramer.

It is found in the cytoplasm. It carries out the reaction L-citrulline + L-aspartate + ATP = 2-(N(omega)-L-arginino)succinate + AMP + diphosphate + H(+). It functions in the pathway amino-acid biosynthesis; L-arginine biosynthesis; L-arginine from L-ornithine and carbamoyl phosphate: step 2/3. The sequence is that of Argininosuccinate synthase from Streptomyces clavuligerus.